A 322-amino-acid polypeptide reads, in one-letter code: MPTIQDERNLMVFSGNANKPLTQSICKELGVRMGKSLVSRFSDGEEQVEIEESVRRQEVFVVQPTCAPSAENLMELLVIIDALKRASVSSVTAVIPYFGYSRQDRRMRSLRVPITAKVAAKMISAIGADRVLTIDLHADQIQGFFDVPVDNVYASPLLLADIWRAYGTDNLIVVSPDVGGVVRARAMAKRLGDTDLAIIDKRRPRANVATVMNIIGEVNGKTCVLVDDLVDTAGTLCAAAVALKQNGATKVVAYITHPVLSGPAVDNINNSELDELVVTDTIPLSDAARECRKIRQLSVAELLAETIRRIAFGESVSSLYVD.

Residues 43–45 (DGE) and 102–103 (RQ) each bind ATP. Residues His137 and Asp177 each contribute to the Mg(2+) site. Lys201 is an active-site residue. D-ribose 5-phosphate contacts are provided by residues Arg203, Asp227, and 231 to 235 (DTAGT).

Belongs to the ribose-phosphate pyrophosphokinase family. Class I subfamily. Homohexamer. Requires Mg(2+) as cofactor.

It localises to the cytoplasm. The enzyme catalyses D-ribose 5-phosphate + ATP = 5-phospho-alpha-D-ribose 1-diphosphate + AMP + H(+). Its pathway is metabolic intermediate biosynthesis; 5-phospho-alpha-D-ribose 1-diphosphate biosynthesis; 5-phospho-alpha-D-ribose 1-diphosphate from D-ribose 5-phosphate (route I): step 1/1. In terms of biological role, involved in the biosynthesis of the central metabolite phospho-alpha-D-ribosyl-1-pyrophosphate (PRPP) via the transfer of pyrophosphoryl group from ATP to 1-hydroxyl of ribose-5-phosphate (Rib-5-P). The polypeptide is Ribose-phosphate pyrophosphokinase (Xylella fastidiosa (strain 9a5c)).